We begin with the raw amino-acid sequence, 515 residues long: Bifunctional purine biosynthesis protein PurH (515 aa).

In terms of domain architecture, MGS-like spans 1-145 (MTKRALISVS…KNHASVTVVV (145 aa)).

Belongs to the PurH family.

The catalysed reaction is (6R)-10-formyltetrahydrofolate + 5-amino-1-(5-phospho-beta-D-ribosyl)imidazole-4-carboxamide = 5-formamido-1-(5-phospho-D-ribosyl)imidazole-4-carboxamide + (6S)-5,6,7,8-tetrahydrofolate. It catalyses the reaction IMP + H2O = 5-formamido-1-(5-phospho-D-ribosyl)imidazole-4-carboxamide. It functions in the pathway purine metabolism; IMP biosynthesis via de novo pathway; 5-formamido-1-(5-phospho-D-ribosyl)imidazole-4-carboxamide from 5-amino-1-(5-phospho-D-ribosyl)imidazole-4-carboxamide (10-formyl THF route): step 1/1. Its pathway is purine metabolism; IMP biosynthesis via de novo pathway; IMP from 5-formamido-1-(5-phospho-D-ribosyl)imidazole-4-carboxamide: step 1/1. The sequence is that of Bifunctional purine biosynthesis protein PurH from Streptococcus gordonii (strain Challis / ATCC 35105 / BCRC 15272 / CH1 / DL1 / V288).